A 217-amino-acid polypeptide reads, in one-letter code: Thymidylate kinase (217 aa).

7-14 (GIEGAGKS) lines the ATP pocket.

The protein belongs to the thymidylate kinase family.

It carries out the reaction dTMP + ATP = dTDP + ADP. Its function is as follows. Phosphorylation of dTMP to form dTDP in both de novo and salvage pathways of dTTP synthesis. This Desulfovibrio desulfuricans (strain ATCC 27774 / DSM 6949 / MB) protein is Thymidylate kinase.